We begin with the raw amino-acid sequence, 206 residues long: Large ribosomal subunit protein uL4 (206 aa).

The tract at residues 45–85 is disordered; it reads QGNRAQKDREQVKHTTKKPWRQKGTGRARAGMSSSPLWRGG. Basic residues predominate over residues 58 to 70; that stretch reads HTTKKPWRQKGTG.

The protein belongs to the universal ribosomal protein uL4 family. As to quaternary structure, part of the 50S ribosomal subunit.

Functionally, one of the primary rRNA binding proteins, this protein initially binds near the 5'-end of the 23S rRNA. It is important during the early stages of 50S assembly. It makes multiple contacts with different domains of the 23S rRNA in the assembled 50S subunit and ribosome. Its function is as follows. Forms part of the polypeptide exit tunnel. This chain is Large ribosomal subunit protein uL4, found in Burkholderia mallei (strain NCTC 10247).